Consider the following 737-residue polypeptide: DNA mismatch repair protein MLH1 (737 aa).

Disordered regions lie at residues M1–I21 and T378–R416. Residues T378–V400 are compositionally biased toward polar residues.

It belongs to the DNA mismatch repair MutL/HexB family. Heterodimer of MLH1 and PMS1, called MutLalpha, which is the major MMR MutL activity correcting base-base mismatches as well as IDLs. The heterodimer binds double strand DNA independently of a mismatch with positive cooperativity and has more than one DNA binding site. Heterodimer of MLH1 and MLH3, called MutLbeta, which is involved in correction of a specific subset of IDLs when associated with MutSbeta. As to expression, ubiquitous.

The protein resides in the nucleus. Functionally, involved in DNA mismatch repair (MMR), correcting insertion-deletion loops (IDLs) resulting from DNA replication, DNA damage or from recombination events between non-identical sequences during meiosis. Component of the MutLbeta heterodimer, which probably forms a ternary complex with the MutSbeta heterodimer that initially recognizes the DNA mismatches. This complex is thought to be responsible for directing the downstream MMR events, including strand discrimination, excision, and resynthesis. Plays a major role in promoting meiotic crossing-over and is involved in maintaining the genetic stability of simple sequence repeats by correction of frameshift intermediates. The polypeptide is DNA mismatch repair protein MLH1 (MLH1) (Arabidopsis thaliana (Mouse-ear cress)).